Here is a 311-residue protein sequence, read N- to C-terminus: Methionyl-tRNA formyltransferase (311 aa).

Position 112–115 (112–115) interacts with (6S)-5,6,7,8-tetrahydrofolate; it reads SLLP.

This sequence belongs to the Fmt family.

The catalysed reaction is L-methionyl-tRNA(fMet) + (6R)-10-formyltetrahydrofolate = N-formyl-L-methionyl-tRNA(fMet) + (6S)-5,6,7,8-tetrahydrofolate + H(+). Functionally, attaches a formyl group to the free amino group of methionyl-tRNA(fMet). The formyl group appears to play a dual role in the initiator identity of N-formylmethionyl-tRNA by promoting its recognition by IF2 and preventing the misappropriation of this tRNA by the elongation apparatus. The protein is Methionyl-tRNA formyltransferase of Bradyrhizobium sp. (strain BTAi1 / ATCC BAA-1182).